We begin with the raw amino-acid sequence, 533 residues long: Glucose-6-phosphate isomerase (533 aa).

The active-site Proton donor is glutamate 322. Active-site residues include histidine 351 and lysine 455.

The protein belongs to the GPI family.

The protein localises to the cytoplasm. The enzyme catalyses alpha-D-glucose 6-phosphate = beta-D-fructose 6-phosphate. The protein operates within carbohydrate biosynthesis; gluconeogenesis. Its pathway is carbohydrate degradation; glycolysis; D-glyceraldehyde 3-phosphate and glycerone phosphate from D-glucose: step 2/4. In terms of biological role, catalyzes the reversible isomerization of glucose-6-phosphate to fructose-6-phosphate. This Desulfitobacterium hafniense (strain Y51) protein is Glucose-6-phosphate isomerase.